A 231-amino-acid polypeptide reads, in one-letter code: 5'-methylthioadenosine/S-adenosylhomocysteine nucleosidase (231 aa).

The Proton acceptor role is filled by glutamate 12. Residues glycine 78, methionine 153, and 174-175 contribute to the substrate site; that span reads ME. The active-site Proton donor is aspartate 198.

This sequence belongs to the PNP/UDP phosphorylase family. MtnN subfamily.

It carries out the reaction S-adenosyl-L-homocysteine + H2O = S-(5-deoxy-D-ribos-5-yl)-L-homocysteine + adenine. It catalyses the reaction S-methyl-5'-thioadenosine + H2O = 5-(methylsulfanyl)-D-ribose + adenine. The catalysed reaction is 5'-deoxyadenosine + H2O = 5-deoxy-D-ribose + adenine. It functions in the pathway amino-acid biosynthesis; L-methionine biosynthesis via salvage pathway; S-methyl-5-thio-alpha-D-ribose 1-phosphate from S-methyl-5'-thioadenosine (hydrolase route): step 1/2. Its function is as follows. Catalyzes the irreversible cleavage of the glycosidic bond in both 5'-methylthioadenosine (MTA) and S-adenosylhomocysteine (SAH/AdoHcy) to adenine and the corresponding thioribose, 5'-methylthioribose and S-ribosylhomocysteine, respectively. Also cleaves 5'-deoxyadenosine, a toxic by-product of radical S-adenosylmethionine (SAM) enzymes, into 5-deoxyribose and adenine. This is 5'-methylthioadenosine/S-adenosylhomocysteine nucleosidase from Bacillus pumilus (strain SAFR-032).